The chain runs to 545 residues: Heparanase (545 aa).

An N-terminal signal peptide occupies residues 1 to 37 (MLACRKPGLRPPLLLLLPLLGPLGPCSPGTPAAAAPA). A heparan sulfate group-binding site is contributed by 64 to 66 (DAN). The propeptide at 112-159 (PAFEERSYWLSQSNQDICKSGSIPSDVEEKLRLEWPFQEQVLLREQYQ) is linker peptide. Cys129 and Cys181 form a disulfide bridge. Residue 160-164 (KKFTN) participates in heparan sulfate group binding. Residues Asn164 and Asn219 are each glycosylated (N-linked (GlcNAc...) asparagine). Catalysis depends on Glu227, which acts as the Proton donor. Heparan sulfate group contacts are provided by residues 272-282 (QPRRNTVKMLK), His298, and Arg305. The tract at residues 290–419 (EVIDSVTWHH…LLFKKLVGNK (130 aa)) is required for heterodimerization with the heparanase 8 kDa subunit. The Nucleophile role is filled by Glu345. Heparan sulfate group-binding positions include 350–352 (FGG) and 391–393 (GNY). Cysteines 439 and 544 form a disulfide. An N-linked (GlcNAc...) asparagine glycan is attached at Asn461. The required for transferring proheparanase to the Golgi apparatus, secretion and subsequent enzyme activity and for enhancement of PKB/AKT1 phosphorylation stretch occupies residues 529–545 (FSYGFFVIRNAKVAACI).

It belongs to the glycosyl hydrolase 79 family. As to quaternary structure, heterodimer; heterodimer formation between the 8 kDa and the 50 kDa subunits is required for enzyme activity. Interacts with TF; the interaction, inhibited by heparin, enhances the generation of activated factor X and activates coagulation. Interacts with HRG; the interaction is enhanced at acidic pH, partially inhibits binding of HPSE to cell surface receptors and modulates its enzymatic activity. Interacts with SDC1; the interaction enhances the shedding of SDC1. Interacts with HPSE2. Proteolytically processed. The cleavage of the 65 kDa form leads to the generation of a linker peptide, and the 8 kDa and the 50 kDa products. The active form, the 8/50 kDa heterodimer, is resistant to degradation. Complete removal of the linker peptide appears to be a prerequisite to the complete activation of the enzyme. In terms of processing, N-glycosylated. Glycosylation of the 50 kDa subunit appears to be essential for its solubility. Highly expressed in placenta and weakly in the kidney, lung, spleen and uterus.

Its subcellular location is the lysosome membrane. It localises to the secreted. The protein localises to the nucleus. It carries out the reaction endohydrolysis of (1-&gt;4)-beta-D-glycosidic bonds of heparan sulfate chains in heparan sulfate proteoglycan.. Inhibited by laminarin sulfate and, to a lower extent, by heparin, sulfamin and EDTA. Activated by calcium and magnesium. Its function is as follows. Endoglycosidase that cleaves heparan sulfate proteoglycans (HSPGs) into heparan sulfate side chains and core proteoglycans. Participates in extracellular matrix (ECM) degradation and remodeling. Selectively cleaves the linkage between a glucuronic acid unit and an N-sulfo glucosamine unit carrying either a 3-O-sulfo or a 6-O-sulfo group. Can also cleave the linkage between a glucuronic acid unit and an N-sulfo glucosamine unit carrying a 2-O-sulfo group, but not linkages between a glucuronic acid unit and a 2-O-sulfated iduronic acid moiety. Essentially inactive at neutral pH but becomes active under acidic conditions such as during tumor invasion and in inflammatory processes. Facilitates cell migration associated with metastasis, wound healing and inflammation. Enhances shedding of syndecans. Acts as a procoagulant by enhancing the generation of activated factor X/F10 in the presence of tissue factor/TF and activated factor VII/F7. Independent of its enzymatic activity, increases cell adhesion to the extracellular matrix (ECM). Enhances AKT1/PKB phosphorylation, possibly via interaction with a lipid raft-resident receptor. Plays a role in the regulation of osteogenesis. Enhances angiogenesis through up-regulation of SRC-mediated activation of VEGF. Implicated in hair follicle inner root sheath differentiation and hair homeostasis. This Bos taurus (Bovine) protein is Heparanase (HPSE).